A 136-amino-acid polypeptide reads, in one-letter code: Large ribosomal subunit protein eL27A (136 aa).

The protein belongs to the eukaryotic ribosomal protein eL27 family. Component of the large ribosomal subunit (LSU). Mature yeast ribosomes consist of a small (40S) and a large (60S) subunit. The 40S small subunit contains 1 molecule of ribosomal RNA (18S rRNA) and at least 33 different proteins. The large 60S subunit contains 3 rRNA molecules (25S, 5.8S and 5S rRNA) and at least 46 different proteins.

The protein localises to the cytoplasm. Its subcellular location is the nucleus. Functionally, component of the ribosome, a large ribonucleoprotein complex responsible for the synthesis of proteins in the cell. The small ribosomal subunit (SSU) binds messenger RNAs (mRNAs) and translates the encoded message by selecting cognate aminoacyl-transfer RNA (tRNA) molecules. The large subunit (LSU) contains the ribosomal catalytic site termed the peptidyl transferase center (PTC), which catalyzes the formation of peptide bonds, thereby polymerizing the amino acids delivered by tRNAs into a polypeptide chain. The nascent polypeptides leave the ribosome through a tunnel in the LSU and interact with protein factors that function in enzymatic processing, targeting, and the membrane insertion of nascent chains at the exit of the ribosomal tunnel. The chain is Large ribosomal subunit protein eL27A (rpl2701) from Schizosaccharomyces pombe (strain 972 / ATCC 24843) (Fission yeast).